The chain runs to 75 residues: Iota-conotoxin-like R11.3 (75 aa).

The signal sequence occupies residues M1–G19. The propeptide occupies E20–N34. 4 cysteine pairs are disulfide-bonded: C39–C53, C46–C58, C52–C63, and C57–C70.

This sequence belongs to the conotoxin I1 superfamily. Expressed by the venom duct.

Its subcellular location is the secreted. Its function is as follows. Iota-conotoxins bind to voltage-gated sodium channels (Nav) and act as agonists by shifting the voltage-dependence of activation to more hyperpolarized levels. Produces general excitatory symptoms. The polypeptide is Iota-conotoxin-like R11.3 (Conus radiatus (Rayed cone)).